The chain runs to 317 residues: 4-hydroxy-3-methylbut-2-enyl diphosphate reductase (317 aa).

Cysteine 12 contributes to the [4Fe-4S] cluster binding site. (2E)-4-hydroxy-3-methylbut-2-enyl diphosphate contacts are provided by histidine 41 and histidine 74. Residues histidine 41 and histidine 74 each contribute to the dimethylallyl diphosphate site. Isopentenyl diphosphate is bound by residues histidine 41 and histidine 74. Cysteine 97 contacts [4Fe-4S] cluster. Position 125 (histidine 125) interacts with (2E)-4-hydroxy-3-methylbut-2-enyl diphosphate. Histidine 125 contributes to the dimethylallyl diphosphate binding site. Histidine 125 contacts isopentenyl diphosphate. The Proton donor role is filled by glutamate 127. Threonine 168 provides a ligand contact to (2E)-4-hydroxy-3-methylbut-2-enyl diphosphate. Position 198 (cysteine 198) interacts with [4Fe-4S] cluster. 4 residues coordinate (2E)-4-hydroxy-3-methylbut-2-enyl diphosphate: serine 226, serine 227, asparagine 228, and serine 270. Dimethylallyl diphosphate contacts are provided by serine 226, serine 227, asparagine 228, and serine 270. Residues serine 226, serine 227, asparagine 228, and serine 270 each contribute to the isopentenyl diphosphate site.

Belongs to the IspH family. As to quaternary structure, homodimer. [4Fe-4S] cluster is required as a cofactor.

The catalysed reaction is isopentenyl diphosphate + 2 oxidized [2Fe-2S]-[ferredoxin] + H2O = (2E)-4-hydroxy-3-methylbut-2-enyl diphosphate + 2 reduced [2Fe-2S]-[ferredoxin] + 2 H(+). The enzyme catalyses dimethylallyl diphosphate + 2 oxidized [2Fe-2S]-[ferredoxin] + H2O = (2E)-4-hydroxy-3-methylbut-2-enyl diphosphate + 2 reduced [2Fe-2S]-[ferredoxin] + 2 H(+). Its pathway is isoprenoid biosynthesis; dimethylallyl diphosphate biosynthesis; dimethylallyl diphosphate from (2E)-4-hydroxy-3-methylbutenyl diphosphate: step 1/1. It functions in the pathway isoprenoid biosynthesis; isopentenyl diphosphate biosynthesis via DXP pathway; isopentenyl diphosphate from 1-deoxy-D-xylulose 5-phosphate: step 6/6. Catalyzes the conversion of 1-hydroxy-2-methyl-2-(E)-butenyl 4-diphosphate (HMBPP) into a mixture of isopentenyl diphosphate (IPP) and dimethylallyl diphosphate (DMAPP). Acts in the terminal step of the DOXP/MEP pathway for isoprenoid precursor biosynthesis. In Yersinia pestis bv. Antiqua (strain Antiqua), this protein is 4-hydroxy-3-methylbut-2-enyl diphosphate reductase.